A 177-amino-acid chain; its full sequence is NAD(P)H-quinone oxidoreductase subunit 6, chloroplastic (177 aa).

Helical transmembrane passes span 10-30 (ILVV…VLFT), 33-53 (IYSA…YILL), 61-81 (AQLL…VMFM), 92-112 (LWTV…FLLI), and 152-172 (FFLP…GAIS).

Belongs to the complex I subunit 6 family. NDH is composed of at least 16 different subunits, 5 of which are encoded in the nucleus.

The protein localises to the plastid. The protein resides in the chloroplast thylakoid membrane. The enzyme catalyses a plastoquinone + NADH + (n+1) H(+)(in) = a plastoquinol + NAD(+) + n H(+)(out). It carries out the reaction a plastoquinone + NADPH + (n+1) H(+)(in) = a plastoquinol + NADP(+) + n H(+)(out). Functionally, NDH shuttles electrons from NAD(P)H:plastoquinone, via FMN and iron-sulfur (Fe-S) centers, to quinones in the photosynthetic chain and possibly in a chloroplast respiratory chain. The immediate electron acceptor for the enzyme in this species is believed to be plastoquinone. Couples the redox reaction to proton translocation, and thus conserves the redox energy in a proton gradient. The sequence is that of NAD(P)H-quinone oxidoreductase subunit 6, chloroplastic (ndhG) from Lemna minor (Common duckweed).